A 307-amino-acid chain; its full sequence is MINKDIYQALQQLIPNEKIKVDEPLKRYTYTKTGGNADFYITPTKNEEVQAVVKYAYQNEIPVTYLGNGSNIIIREGGIRGIVISLLSLDHIDVSDDAIIAGSGAAIIDVSRVARDYALTGLEFACGIPGSIGGAVYMNAGAYGGEVKDCIDYALCVNEQGSLIKLTTKELELDYRNSIIQKEHLVVLEAAFTLAPGKMTEIQAKMDDLTERRESKQPLEYPSCGSVFQRPPGHFAGKLIQDSNLQGHRIGGVEVSTKHAGFMVNVDNGTATDYENLIHYVQKTVKEKFGIELNREVRIIGEHPKES.

Residues 33 to 197 enclose the FAD-binding PCMH-type domain; sequence TGGNADFYIT…LEAAFTLAPG (165 aa). Arginine 176 is an active-site residue. Serine 226 (proton donor) is an active-site residue. Glutamate 296 is an active-site residue.

The protein belongs to the MurB family. It depends on FAD as a cofactor.

It localises to the cytoplasm. The enzyme catalyses UDP-N-acetyl-alpha-D-muramate + NADP(+) = UDP-N-acetyl-3-O-(1-carboxyvinyl)-alpha-D-glucosamine + NADPH + H(+). It participates in cell wall biogenesis; peptidoglycan biosynthesis. Functionally, cell wall formation. This Staphylococcus aureus (strain Mu3 / ATCC 700698) protein is UDP-N-acetylenolpyruvoylglucosamine reductase.